Here is a 355-residue protein sequence, read N- to C-terminus: Protein RecA (355 aa).

65-72 (GPESSGKT) is an ATP binding site.

The protein belongs to the RecA family.

It is found in the cytoplasm. Its function is as follows. Can catalyze the hydrolysis of ATP in the presence of single-stranded DNA, the ATP-dependent uptake of single-stranded DNA by duplex DNA, and the ATP-dependent hybridization of homologous single-stranded DNAs. It interacts with LexA causing its activation and leading to its autocatalytic cleavage. This Pseudomonas putida (strain GB-1) protein is Protein RecA.